Reading from the N-terminus, the 198-residue chain is Putative nitroreductase MJ1384 (198 aa).

Belongs to the nitroreductase family. FMN serves as cofactor.

This Methanocaldococcus jannaschii (strain ATCC 43067 / DSM 2661 / JAL-1 / JCM 10045 / NBRC 100440) (Methanococcus jannaschii) protein is Putative nitroreductase MJ1384.